Here is a 372-residue protein sequence, read N- to C-terminus: Tyrosine--tRNA ligase (372 aa).

Positions 37, 169, 173, 176, and 191 each coordinate L-tyrosine. Positions 246 to 250 (KMSKS) match the 'KMSKS' region motif. ATP is bound at residue Lys249.

Belongs to the class-I aminoacyl-tRNA synthetase family. TyrS type 4 subfamily. In terms of assembly, homodimer.

Its subcellular location is the cytoplasm. It carries out the reaction tRNA(Tyr) + L-tyrosine + ATP = L-tyrosyl-tRNA(Tyr) + AMP + diphosphate + H(+). Its function is as follows. Catalyzes the attachment of tyrosine to tRNA(Tyr) in a two-step reaction: tyrosine is first activated by ATP to form Tyr-AMP and then transferred to the acceptor end of tRNA(Tyr). The sequence is that of Tyrosine--tRNA ligase from Pyrobaculum arsenaticum (strain DSM 13514 / JCM 11321 / PZ6).